The primary structure comprises 273 residues: 2-dehydro-3-deoxyphosphooctonate aldolase (273 aa).

This sequence belongs to the KdsA family.

It localises to the cytoplasm. It catalyses the reaction D-arabinose 5-phosphate + phosphoenolpyruvate + H2O = 3-deoxy-alpha-D-manno-2-octulosonate-8-phosphate + phosphate. The protein operates within carbohydrate biosynthesis; 3-deoxy-D-manno-octulosonate biosynthesis; 3-deoxy-D-manno-octulosonate from D-ribulose 5-phosphate: step 2/3. Its pathway is bacterial outer membrane biogenesis; lipopolysaccharide biosynthesis. The chain is 2-dehydro-3-deoxyphosphooctonate aldolase from Citrifermentans bemidjiense (strain ATCC BAA-1014 / DSM 16622 / JCM 12645 / Bem) (Geobacter bemidjiensis).